The chain runs to 188 residues: Anaphase-promoting complex subunit 10 (188 aa).

The 184-residue stretch at 4-187 (NSNINSNSRL…SPEVSMFQTL (184 aa)) folds into the DOC domain.

The protein belongs to the APC10 family. As to quaternary structure, the APC/C is composed of at least 13 subunits that stay tightly associated throughout the cell cycle: anapc1, anapc2, anapc3, anapc4, anapc5, anapc6, anapc7, anapc8, anapc10, anapc11, cdc20, cdc26 and cdh1.

It is found in the nucleus. It functions in the pathway protein modification; protein ubiquitination. Component of the anaphase promoting complex/cyclosome (APC/C), a cell cycle-regulated E3 ubiquitin-protein ligase complex that controls progression through mitosis and the G1 phase of the cell cycle. This is Anaphase-promoting complex subunit 10 (anapc10) from Dictyostelium discoideum (Social amoeba).